An 850-amino-acid polypeptide reads, in one-letter code: PH domain-containing protein YHR131C (850 aa).

The PH domain maps to 194-306; the sequence is RIHSDLVHRS…MYLSIGISVS (113 aa). A compositionally biased stretch (basic residues) spans 324–338; the sequence is RRRRRRRRRRRRHTH. Disordered stretches follow at residues 324–348, 406–428, 451–494, 583–659, and 793–850; these read RRRRRRRRRRRRHTHRSESSMGSFS, SAASGESSDNSTLGSTRSLSGCS, SSRT…GVPV, EASI…TDDS, and TTKD…QITA. A compositionally biased stretch (low complexity) spans 406–416; sequence SAASGESSDNS. Positions 417 to 428 are enriched in polar residues; sequence TLGSTRSLSGCS. Over residues 479–489 the composition is skewed to basic and acidic residues; the sequence is HHESSGGDHPE. Over residues 605 to 619 the composition is skewed to polar residues; that stretch reads ESATDLSQSSRSLCL. Acidic residues-rich tracts occupy residues 626 to 658 and 799 to 850; these read INDDESATETDEDENDGETDEYAGDDTNDDTDD and DHGE…QITA.

Its subcellular location is the cytoplasm. The sequence is that of PH domain-containing protein YHR131C from Saccharomyces cerevisiae (strain ATCC 204508 / S288c) (Baker's yeast).